The chain runs to 699 residues: Elongation factor G (699 aa).

In terms of domain architecture, tr-type G spans 8–283; that stretch reads EHIRNIGICA…AVVYFLPSPI (276 aa). Residues 17–24, 81–85, and 135–138 each bind GTP; these read AHIDAGKT, DTPGH, and NKMD.

It belongs to the TRAFAC class translation factor GTPase superfamily. Classic translation factor GTPase family. EF-G/EF-2 subfamily.

It is found in the cytoplasm. Functionally, catalyzes the GTP-dependent ribosomal translocation step during translation elongation. During this step, the ribosome changes from the pre-translocational (PRE) to the post-translocational (POST) state as the newly formed A-site-bound peptidyl-tRNA and P-site-bound deacylated tRNA move to the P and E sites, respectively. Catalyzes the coordinated movement of the two tRNA molecules, the mRNA and conformational changes in the ribosome. In Rickettsia akari (strain Hartford), this protein is Elongation factor G.